A 277-amino-acid polypeptide reads, in one-letter code: Large ribosomal subunit protein uL2 (277 aa).

Disordered stretches follow at residues 37 to 58 and 222 to 277; these read LHSK…GGGH and GVAM…NRRR. The segment covering 268-277 has biased composition (basic residues); it reads VRRRKQNRRR.

The protein belongs to the universal ribosomal protein uL2 family. In terms of assembly, part of the 50S ribosomal subunit. Forms a bridge to the 30S subunit in the 70S ribosome.

Functionally, one of the primary rRNA binding proteins. Required for association of the 30S and 50S subunits to form the 70S ribosome, for tRNA binding and peptide bond formation. It has been suggested to have peptidyltransferase activity; this is somewhat controversial. Makes several contacts with the 16S rRNA in the 70S ribosome. The polypeptide is Large ribosomal subunit protein uL2 (Parafrankia sp. (strain EAN1pec)).